The primary structure comprises 284 residues: D-tagatose-1,6-bisphosphate aldolase subunit GatY (284 aa).

The active-site Proton donor is Asp-82. Zn(2+)-binding residues include His-83 and His-180. Cys-181 provides a ligand contact to dihydroxyacetone phosphate. Zn(2+) is bound at residue His-208. Dihydroxyacetone phosphate is bound by residues Gly-209–Ser-211 and Asn-230–Thr-233.

The protein belongs to the class II fructose-bisphosphate aldolase family. TagBP aldolase GatY subfamily. Forms a complex with GatZ. Zn(2+) serves as cofactor.

The enzyme catalyses D-tagatofuranose 1,6-bisphosphate = D-glyceraldehyde 3-phosphate + dihydroxyacetone phosphate. It functions in the pathway carbohydrate metabolism; D-tagatose 6-phosphate degradation; D-glyceraldehyde 3-phosphate and glycerone phosphate from D-tagatose 6-phosphate: step 2/2. Its function is as follows. Catalytic subunit of the tagatose-1,6-bisphosphate aldolase GatYZ, which catalyzes the reversible aldol condensation of dihydroxyacetone phosphate (DHAP or glycerone-phosphate) with glyceraldehyde 3-phosphate (G3P) to produce tagatose 1,6-bisphosphate (TBP). Requires GatZ subunit for full activity and stability. Is involved in the catabolism of galactitol. This chain is D-tagatose-1,6-bisphosphate aldolase subunit GatY, found in Salmonella paratyphi A (strain ATCC 9150 / SARB42).